A 459-amino-acid polypeptide reads, in one-letter code: Protein phosphatase 1M (459 aa).

The segment covering 1–10 has biased composition (basic residues); that stretch reads MSAGWFRRRF. The segment at 1-64 is disordered; sequence MSAGWFRRRF…SRPVRSPARG (64 aa). Pro residues predominate over residues 14-27; the sequence is EPLPAPRPPGPHAS. Positions 38–48 are enriched in low complexity; sequence RGSSSSPGAAD. Asp-125 and Gly-126 together coordinate Mn(2+). Residues 162–459 enclose the PPM-type phosphatase domain; the sequence is MHLNGRCICP…HSQGQESSDH (298 aa).

This sequence belongs to the PP2C family. Requires Mg(2+) as cofactor. Mn(2+) serves as cofactor.

The protein resides in the nucleus. The enzyme catalyses O-phospho-L-seryl-[protein] + H2O = L-seryl-[protein] + phosphate. It catalyses the reaction O-phospho-L-threonyl-[protein] + H2O = L-threonyl-[protein] + phosphate. This chain is Protein phosphatase 1M (PPM1M), found in Homo sapiens (Human).